We begin with the raw amino-acid sequence, 244 residues long: Protein A47 (244 aa).

It belongs to the orthopoxvirus A47 protein family.

The sequence is that of Protein A47 from Variola virus.